A 420-amino-acid polypeptide reads, in one-letter code: UDP-N-acetyl-D-mannosamine dehydrogenase (420 aa).

Residues tyrosine 13, isoleucine 14, aspartate 33, threonine 85, and threonine 126 each contribute to the NAD(+) site. UDP-N-acetyl-alpha-D-mannosaminouronate-binding residues include arginine 160, valine 161, lysine 212, asparagine 216, arginine 219, histidine 250, arginine 252, and glycine 263. Lysine 212 acts as the Proton donor/acceptor in catalysis. Cysteine 266 functions as the Nucleophile in the catalytic mechanism. UDP-N-acetyl-alpha-D-mannosaminouronate is bound by residues phenylalanine 330 and lysine 331. Arginine 338 provides a ligand contact to NAD(+). Position 416 (lysine 416) interacts with UDP-N-acetyl-alpha-D-mannosaminouronate.

Belongs to the UDP-glucose/GDP-mannose dehydrogenase family. WecC subfamily. In terms of assembly, homodimer.

The catalysed reaction is UDP-N-acetyl-alpha-D-mannosamine + 2 NAD(+) + H2O = UDP-N-acetyl-alpha-D-mannosaminouronate + 2 NADH + 3 H(+). It participates in bacterial outer membrane biogenesis; enterobacterial common antigen biosynthesis. Catalyzes the four-electron oxidation of UDP-N-acetyl-D-mannosamine (UDP-ManNAc), reducing NAD(+) and releasing UDP-N-acetylmannosaminuronic acid (UDP-ManNAcA). The protein is UDP-N-acetyl-D-mannosamine dehydrogenase of Salmonella typhimurium (strain LT2 / SGSC1412 / ATCC 700720).